The primary structure comprises 437 residues: Ribosomal protein uS12 methylthiotransferase RimO (437 aa).

An MTTase N-terminal domain is found at 9 to 125; sequence PAIFLLSLGC…VLAAIGAHYC (117 aa). C18, C54, C88, C149, C153, and C156 together coordinate [4Fe-4S] cluster. A Radical SAM core domain is found at 135–364; it reads LTPPHYAFLK…MELQESIAAS (230 aa). The TRAM domain occupies 367-434; it reads RKLEGQTLTV…AYELFGRVGS (68 aa).

This sequence belongs to the methylthiotransferase family. RimO subfamily. [4Fe-4S] cluster serves as cofactor.

Its subcellular location is the cytoplasm. It carries out the reaction L-aspartate(89)-[ribosomal protein uS12]-hydrogen + (sulfur carrier)-SH + AH2 + 2 S-adenosyl-L-methionine = 3-methylsulfanyl-L-aspartate(89)-[ribosomal protein uS12]-hydrogen + (sulfur carrier)-H + 5'-deoxyadenosine + L-methionine + A + S-adenosyl-L-homocysteine + 2 H(+). Catalyzes the methylthiolation of an aspartic acid residue of ribosomal protein uS12. This Chlorobaculum parvum (strain DSM 263 / NCIMB 8327) (Chlorobium vibrioforme subsp. thiosulfatophilum) protein is Ribosomal protein uS12 methylthiotransferase RimO.